A 121-amino-acid polypeptide reads, in one-letter code: Small ribosomal subunit protein uS13 (121 aa).

The tract at residues 91–121 (HRRGLPVRGQNSKNNARTRKGPRRTVANKKK) is disordered. The span at 106 to 121 (ARTRKGPRRTVANKKK) shows a compositional bias: basic residues.

The protein belongs to the universal ribosomal protein uS13 family. Part of the 30S ribosomal subunit. Forms a loose heterodimer with protein S19. Forms two bridges to the 50S subunit in the 70S ribosome.

Located at the top of the head of the 30S subunit, it contacts several helices of the 16S rRNA. In the 70S ribosome it contacts the 23S rRNA (bridge B1a) and protein L5 of the 50S subunit (bridge B1b), connecting the 2 subunits; these bridges are implicated in subunit movement. Contacts the tRNAs in the A and P-sites. The polypeptide is Small ribosomal subunit protein uS13 (Bacillus cereus (strain G9842)).